The sequence spans 350 residues: Cephaeline 6'-O-methyltransferase IpeOMT1 (350 aa).

S-adenosyl-L-methionine is bound by residues Gly-193, Asp-216, Asp-236, Met-237, and Lys-250. His-254 acts as the Proton acceptor in catalysis.

This sequence belongs to the class I-like SAM-binding methyltransferase superfamily. Cation-independent O-methyltransferase family. As to expression, expressed in roots.

The protein resides in the cytoplasm. It is found in the cytosol. It catalyses the reaction cephaeline + S-adenosyl-L-methionine = emetine + S-adenosyl-L-homocysteine + H(+). The catalysed reaction is deacetylisoipecoside + S-adenosyl-L-methionine = 6-O-methyldeacetylisoipecoside + S-adenosyl-L-homocysteine + H(+). It carries out the reaction 7-O-methyldeacetylisoipecoside + S-adenosyl-L-methionine = 6,7-O,O-dimethyldeacetylisoipecoside + S-adenosyl-L-homocysteine + H(+). The enzyme catalyses norcoclaurine + S-adenosyl-L-methionine = coclaurine + S-adenosyl-L-homocysteine + H(+). It catalyses the reaction (S)-norprotosinomenine + S-adenosyl-L-methionine = (S)-6-O-methylnorprotosinomenine + S-adenosyl-L-homocysteine + H(+). The catalysed reaction is (R)-norprotosinomenine + S-adenosyl-L-methionine = (R)-6-O-methylnorprotosinomenine + S-adenosyl-L-homocysteine + H(+). It participates in alkaloid biosynthesis. Functionally, O-methyltransferase involved in the biosynthesis of ipecac and benzylisoquinoline monoterpenoid-isoquinoline alkaloids natural products, starting by the condensation of dopamine and secologanin, and including emetine and cephaeline, drugs used both as anti-protozoal (e.g. treatment of ameobiasis) and as emetic agents. Mediates cephaeline 6'-O-methylation to produce emetine. Catalyzes the 6-O-methylation of N-deacetylisoipecoside, 7-O-methyl-N-deacetylisoipecoside, isococlaurine, norcoclaurine, (S)-norprotosinomenine and (R)-norprotosinomenine, and, with a lower efficiency, of 4'-O-methyllaudanosoline, isoorientaline and protosinomenine. Supports also the 4'-O-methylation of nororientaline. This chain is Cephaeline 6'-O-methyltransferase IpeOMT1, found in Carapichea ipecacuanha (Ipecac).